The sequence spans 268 residues: Tryptophan synthase alpha chain (268 aa).

Active-site proton acceptor residues include E49 and D60.

It belongs to the TrpA family. In terms of assembly, tetramer of two alpha and two beta chains.

The enzyme catalyses (1S,2R)-1-C-(indol-3-yl)glycerol 3-phosphate + L-serine = D-glyceraldehyde 3-phosphate + L-tryptophan + H2O. It participates in amino-acid biosynthesis; L-tryptophan biosynthesis; L-tryptophan from chorismate: step 5/5. Its function is as follows. The alpha subunit is responsible for the aldol cleavage of indoleglycerol phosphate to indole and glyceraldehyde 3-phosphate. This chain is Tryptophan synthase alpha chain, found in Mannheimia succiniciproducens (strain KCTC 0769BP / MBEL55E).